The primary structure comprises 189 residues: Holliday junction branch migration complex subunit RuvA (189 aa).

A domain I region spans residues 1–63; sequence MIHALNGKVE…DDGISLYGFL (63 aa). The domain II stretch occupies residues 64-135; sequence EVIKLKLFEK…ELKDTIKELD (72 aa). The segment at 135 to 139 is flexible linker; that stretch reads DVSIN. The segment at 140–189 is domain III; it reads EKDRKVLEAIEALVTLGFNRNQAKKAVNKVAAKDDKLDDIIKKALRFLSR.

Belongs to the RuvA family. As to quaternary structure, homotetramer. Forms an RuvA(8)-RuvB(12)-Holliday junction (HJ) complex. HJ DNA is sandwiched between 2 RuvA tetramers; dsDNA enters through RuvA and exits via RuvB. An RuvB hexamer assembles on each DNA strand where it exits the tetramer. Each RuvB hexamer is contacted by two RuvA subunits (via domain III) on 2 adjacent RuvB subunits; this complex drives branch migration. In the full resolvosome a probable DNA-RuvA(4)-RuvB(12)-RuvC(2) complex forms which resolves the HJ.

The protein localises to the cytoplasm. Functionally, the RuvA-RuvB-RuvC complex processes Holliday junction (HJ) DNA during genetic recombination and DNA repair, while the RuvA-RuvB complex plays an important role in the rescue of blocked DNA replication forks via replication fork reversal (RFR). RuvA specifically binds to HJ cruciform DNA, conferring on it an open structure. The RuvB hexamer acts as an ATP-dependent pump, pulling dsDNA into and through the RuvAB complex. HJ branch migration allows RuvC to scan DNA until it finds its consensus sequence, where it cleaves and resolves the cruciform DNA. The protein is Holliday junction branch migration complex subunit RuvA of Thermosipho africanus (strain TCF52B).